The following is a 366-amino-acid chain: uncharacterized protein (366 aa).

A CP-type G domain is found at 59-222 (LNILHGIGET…LYDTPGIINN (164 aa)).

This sequence belongs to the TRAFAC class YlqF/YawG GTPase family.

Functionally, binds GTP and GDP. This is an uncharacterized protein from Bacillus subtilis (strain 168).